Here is a 2243-residue protein sequence, read N- to C-terminus: Zinc finger FYVE domain-containing protein 26 homolog (2243 aa).

2 disordered regions span residues 386 to 416 (SQRK…RPTA) and 514 to 556 (KKKA…GKAS). Residues 393–408 (GENDEEDDEQYVDDDV) are compositionally biased toward acidic residues. At Tyr-403 the chain carries Phosphotyrosine. Residues 517-528 (ASSDDESRERSN) show a composition bias toward basic and acidic residues. A compositionally biased stretch (basic residues) spans 534-543 (NRRKARRQRR). An LRR 1 repeat occupies 617 to 644 (KKIIETFHLEHSQLNRELHFMEQQQLVK). Position 1424 is a phosphoserine (Ser-1424). The FYVE-type zinc finger occupies 1444 to 1500 (DEEASHCMCCRRAAFTMLMRRHHCRRCGRVVCYACSTHRIRIPELYDELEVRICNDC). Positions 1450, 1453, 1467, 1470, 1475, 1478, 1497, and 1500 each coordinate Zn(2+). A disordered region spans residues 1505-1534 (TPAKDQGDGTSSERSAISGQVSKSSGRSDS). A compositionally biased stretch (polar residues) spans 1512-1534 (DGTSSERSAISGQVSKSSGRSDS). The LRR 2 repeat unit spans residues 1887–1912 (YPQLANGGLNVLMDELQQLDDAQFTA).

It belongs to the ZFYVE26 family.

Its function is as follows. Phosphatidylinositol 3-phosphate (PtdIns[3]P)-binding protein. Involved in autophagy. The sequence is that of Zinc finger FYVE domain-containing protein 26 homolog from Drosophila melanogaster (Fruit fly).